Reading from the N-terminus, the 108-residue chain is Protein Asterix (108 aa).

The interval 1–29 is disordered; the sequence is MNMTVDPRRKEKINRYKAPKNQGQSGGAN. The helical transmembrane segment at 80 to 96 threads the bilayer; that stretch reads VLSSFMLSVSAVVMSYL.

It belongs to the Asterix family.

The protein localises to the membrane. This chain is Protein Asterix, found in Drosophila melanogaster (Fruit fly).